Consider the following 394-residue polypeptide: MKPNTDFMLIADGAKVLTQGNLTEHCAIEVSDGIICGLKSTISAEWTADKPHYRLTSGTLVAGFIDTQVNGGGGLMFNHVPTLETLRLMMQAHRQFGTTAMLPTVITDDIEVMQAAADAVAEAIDCQVPGIIGIHFEGPHLSVAKRGCHPPAHLRGITEREWLLYLRQDLGVRLITLAPESVTPEQIKRLVASGAIISLGHSNADGETVLKAIEAGASGFTHLYNGMSALTSREPGMVGAAFASENTYCGIILDGQHVHPISALAAWRAKGTEHLMLVTDAMSPLGSDQTEFQFFDGKVVREGMTLRDQHGSLAGSVLDMASAVRYAATELNLGLSNAVQMATRTPAEFIQRPQLGDIAEGKQADWVWLDDDQRVLAVWIAGELLYQAEQARFA.

Zn(2+) is bound at residue E137. 148 to 149 provides a ligand contact to substrate; the sequence is CH. 2 residues coordinate Zn(2+): H201 and H222. Residues 225–226, R233, and 254–257 contribute to the substrate site; these read NG and DGQH. D280 functions as the Proton donor/acceptor in the catalytic mechanism. 313–315 provides a ligand contact to substrate; the sequence is LAG.

This sequence belongs to the metallo-dependent hydrolases superfamily. NagA family.

The protein localises to the cytoplasm. The enzyme catalyses N-acetyl-D-galactosamine 6-phosphate + H2O = D-galactosamine 6-phosphate + acetate. The catalysed reaction is N-acetyl-D-glucosamine 6-phosphate + H2O = D-glucosamine 6-phosphate + acetate. Functionally, involved in the pathway of N-acetyl-D-galactosamine degradation. Catalyzes the conversion of N-acetyl-D-galactosamine 6-phosphate to D-galactosamine 6-phosphate and acetate. It can also catalyze the conversion of N-acetyl-D-glucosamine 6-phosphate. The polypeptide is N-acetylgalactosamine-6-phosphate deacetylase (Shewanella sp. (strain ANA-3)).